We begin with the raw amino-acid sequence, 469 residues long: Arginine biosynthesis bifunctional protein ArgJ, mitochondrial (469 aa).

Substrate-binding residues include Thr199, Lys228, Thr239, Glu325, Asn464, and Thr469. Residue Thr239 is the Nucleophile of the active site.

It belongs to the ArgJ family. In terms of assembly, heterodimer of an alpha and a beta chain. The alpha and beta chains are autoproteolytically processed from a single precursor protein within the mitochondrion.

The protein localises to the mitochondrion matrix. It catalyses the reaction N(2)-acetyl-L-ornithine + L-glutamate = N-acetyl-L-glutamate + L-ornithine. The catalysed reaction is L-glutamate + acetyl-CoA = N-acetyl-L-glutamate + CoA + H(+). The protein operates within amino-acid biosynthesis; L-arginine biosynthesis; L-ornithine and N-acetyl-L-glutamate from L-glutamate and N(2)-acetyl-L-ornithine (cyclic): step 1/1. It functions in the pathway amino-acid biosynthesis; L-arginine biosynthesis; N(2)-acetyl-L-ornithine from L-glutamate: step 1/4. In terms of biological role, catalyzes two activities which are involved in the cyclic version of arginine biosynthesis: the synthesis of acetylglutamate from glutamate and acetyl-CoA, and of ornithine by transacetylation between acetylornithine and glutamate. The sequence is that of Arginine biosynthesis bifunctional protein ArgJ, mitochondrial from Sordaria macrospora (strain ATCC MYA-333 / DSM 997 / K(L3346) / K-hell).